The following is a 704-amino-acid chain: MTEIGREPKKKSKGNRAIRMNLFFLAVFVLFTALIFKLGVVQIVEGEQHEEDAEKSNAKTAYYPAPRGKMYDRNQKVAVDNQSVPEIVYVSTSSTKTEDKIKTAKRLASFIHIDTEFLKERDLRDYWIAAHPKKAAALLKESESNLKGDQAYKLQIERVPDQELKAIQQDDEEMETAAIYTRFSSGNAYEPQIVKAMNPNKSNSNGKNGALLDEKKNSSQRPKNDLTYDEISIVSEHLEELPGIDIVNDWTRKYPYDKTLYSVFGGVTTPDQGLLSDRKDFYLTRGYANNDRVGKSYLEYQYEEYLNSHKEKVEYVEDNKGNVVSQKTIDKGSRGYDLQLSFDMELQAKVEKIIEEEVRNSRARGNYMLDRAFAVMMDPNNGDILSMAGKKIDLKTNKIEDYAIGAFTTQYEMGSAVKGATVLAGYQDGIPHYKYYIDAPMLLGTNLIKKSYTNMGTINELTALQKSSNVYMFNVAMHIAGVTYKPHGSLPADQNDLLKMRNYYSQFGLGVKTGIDLPQESAGMQTTPKTVGGLILDLAIGQYDTYTPLQMAQYISVIANGGYRVQPRIVTSIHKPGKKDQLGKAIEHRKPKVLNKINNSESDLKQVQTGMKLVTSSGTAKNTFTEDVSGKTGTAETFYYGTNRNWWGKKTYNLTFVGYYPSKKPKVAFSVVVPSVDDDDKINKIIAKRAIHAYAELEKKHSKK.

Residues 23–43 (FFLAVFVLFTALIFKLGVVQI) traverse the membrane as a helical segment. Residues 197–223 (MNPNKSNSNGKNGALLDEKKNSSQRPK) form a disordered region. The span at 200–209 (NKSNSNGKNG) shows a compositional bias: low complexity. The span at 212 to 223 (LDEKKNSSQRPK) shows a compositional bias: basic and acidic residues. Residue Ser415 is the Acyl-ester intermediate of the active site.

The protein belongs to the transpeptidase family.

It localises to the cell membrane. The catalysed reaction is Preferential cleavage: (Ac)2-L-Lys-D-Ala-|-D-Ala. Also transpeptidation of peptidyl-alanyl moieties that are N-acyl substituents of D-alanine.. Its pathway is cell wall biogenesis; peptidoglycan biosynthesis. Involved in the polymerization of peptidoglycan. Plays a redundant role with PBP-2A (pbpA) in determining the rod shape of the cell during vegetative growth and spore outgrowth. The protein is Penicillin-binding protein H of Bacillus subtilis (strain 168).